We begin with the raw amino-acid sequence, 506 residues long: 5-OH-xanthotoxin synthase (506 aa).

Residues 3–23 (PVVIFLVLAFPIASVYLLFYH) form a helical membrane-spanning segment. Residues 365 to 370 (TGPLLI) form a substrate specificity region. Position 446 (cysteine 446) interacts with heme.

It belongs to the cytochrome P450 family. Heme serves as cofactor.

The protein resides in the microsome membrane. The enzyme catalyses xanthotoxin + reduced [NADPH--hemoprotein reductase] + O2 = 5-hydroxyxanthotoxin + oxidized [NADPH--hemoprotein reductase] + H2O + 2 H(+). Its pathway is secondary metabolite biosynthesis. Its function is as follows. Involved in the biosynthesis of coumarins and furanocoumarins (FCs), natural products required for defense responses against attacks by predators with potential medical and agroindustrial usages such as anticoagulant, rodenticide and artificial vanilla substitutes. Catalyzes the conversion of xanthotoxin into 5-hydroxyxanthotoxin. The sequence is that of 5-OH-xanthotoxin synthase from Pastinaca sativa (Wild parsnip).